A 192-amino-acid polypeptide reads, in one-letter code: uncharacterized protein (192 aa).

The chain crosses the membrane as a helical; Signal-anchor span at residues 7 to 29; the sequence is FIHSISGGSSLLSASEVFASAFF. Residues 51–67 traverse the membrane as a helical segment; the sequence is YFLCVLVSTFLNSLVII.

The protein localises to the membrane. This is an uncharacterized protein from Saccharomyces cerevisiae (strain ATCC 204508 / S288c) (Baker's yeast).